The sequence spans 233 residues: Small ribosomal subunit protein uS3 (233 aa).

In terms of domain architecture, KH type-2 spans 39-107 (IRAFLKRKLY…DVNINIKEER (69 aa)). Residues 212–222 (MQPEKTEESAP) are compositionally biased toward basic and acidic residues. A disordered region spans residues 212 to 233 (MQPEKTEESAPAKKSRRTRRGK). The segment covering 224–233 (KKSRRTRRGK) has biased composition (basic residues).

This sequence belongs to the universal ribosomal protein uS3 family. In terms of assembly, part of the 30S ribosomal subunit. Forms a tight complex with proteins S10 and S14.

Binds the lower part of the 30S subunit head. Binds mRNA in the 70S ribosome, positioning it for translation. This Campylobacter jejuni subsp. doylei (strain ATCC BAA-1458 / RM4099 / 269.97) protein is Small ribosomal subunit protein uS3.